Consider the following 245-residue polypeptide: Ribosomal RNA large subunit methyltransferase E (245 aa).

S-adenosyl-L-methionine contacts are provided by glycine 58, tryptophan 60, aspartate 78, aspartate 96, and aspartate 123. Lysine 163 serves as the catalytic Proton acceptor.

Belongs to the class I-like SAM-binding methyltransferase superfamily. RNA methyltransferase RlmE family.

The protein resides in the cytoplasm. The enzyme catalyses uridine(2552) in 23S rRNA + S-adenosyl-L-methionine = 2'-O-methyluridine(2552) in 23S rRNA + S-adenosyl-L-homocysteine + H(+). Functionally, specifically methylates the uridine in position 2552 of 23S rRNA at the 2'-O position of the ribose in the fully assembled 50S ribosomal subunit. In Methanocaldococcus jannaschii (strain ATCC 43067 / DSM 2661 / JAL-1 / JCM 10045 / NBRC 100440) (Methanococcus jannaschii), this protein is Ribosomal RNA large subunit methyltransferase E.